The following is a 253-amino-acid chain: Tetraspanin-11 (253 aa).

Transmembrane regions (helical) follow at residues 19–39 (LLFI…AVGI), 63–83 (ILIF…GAII), and 93–113 (YFCL…LAHV). A glycan (N-linked (GlcNAc...) asparagine) is linked at Asn127. A helical membrane pass occupies residues 220 to 240 (LLLMGAVGIGVACLQICGMVL).

Belongs to the tetraspanin (TM4SF) family.

The protein resides in the membrane. The sequence is that of Tetraspanin-11 (Tspan11) from Mus musculus (Mouse).